A 1113-amino-acid chain; its full sequence is uncharacterized protein (1113 aa).

313–320 (GPPGTGKS) contributes to the ATP binding site.

This sequence belongs to the DNA2/NAM7 helicase family.

This is an uncharacterized protein from Mycoplasma genitalium (strain ATCC 33530 / DSM 19775 / NCTC 10195 / G37) (Mycoplasmoides genitalium).